A 921-amino-acid polypeptide reads, in one-letter code: Probable dipeptidyl-aminopeptidase B (921 aa).

2 disordered regions span residues 1 to 33 (MAGH…TAST) and 45 to 66 (VAAN…RGER). At 1–109 (MAGHPEENAQ…NKSVDKKLRR (109 aa)) the chain is on the cytoplasmic side. The span at 10-22 (QLLSTEQESMSRN) shows a compositional bias: polar residues. A compositionally biased stretch (low complexity) spans 23–33 (SSDSVASTAST). Residues 110-130 (LIWIIGGVFIGAWVLALFIFL) form a helical; Signal-anchor for type II membrane protein membrane-spanning segment. Topologically, residues 131-921 (GKQAYKHSSE…VPLEIDAAKV (791 aa)) are vacuolar. The segment at 138–157 (SSESPHDPQATSSRGSGKKV) is disordered. Asn-362 is a glycosylation site (N-linked (GlcNAc...) asparagine). The active-site Charge relay system is the Ser-768. Asn-822 is a glycosylation site (N-linked (GlcNAc...) asparagine). Residues Asp-845 and His-878 each act as charge relay system in the active site.

This sequence belongs to the peptidase S9B family.

The protein resides in the vacuole membrane. The catalysed reaction is Release of an N-terminal dipeptide, Xaa-Yaa-|-Zaa-, from a polypeptide, preferentially when Yaa is Pro, provided Zaa is neither Pro nor hydroxyproline.. Functionally, type IV dipeptidyl-peptidase which removes N-terminal dipeptides sequentially from polypeptides having unsubstituted N-termini provided that the penultimate residue is proline. The protein is Probable dipeptidyl-aminopeptidase B (dapB) of Botryotinia fuckeliana (strain B05.10) (Noble rot fungus).